Here is a 248-residue protein sequence, read N- to C-terminus: Ras-related protein RSR1 (248 aa).

GTP is bound at residue 10 to 17 (GAGGVGKS). The Effector region signature appears at 32–40 (YDPTIEDSY). GTP-binding positions include 57-61 (DTAGV) and 116-119 (NKCD). Residues 182 to 248 (LQKQQQQQQQ…SSGSKFCTII (67 aa)) are disordered. The span at 184 to 214 (KQQQQQQQEQDAEGQQQQQKSGKSKSSATQK) shows a compositional bias: low complexity. Composition is skewed to polar residues over residues 219 to 231 (DGQTDVNARLKQS) and 238 to 248 (SSSGSKFCTII). C245 is modified (cysteine methyl ester). C245 carries the S-geranylgeranyl cysteine lipid modification. Residues 246-248 (TII) constitute a propeptide, removed in mature form.

This sequence belongs to the small GTPase superfamily. Ras family.

The protein localises to the cell membrane. It catalyses the reaction GTP + H2O = GDP + phosphate + H(+). Its activity is regulated as follows. Alternates between an inactive form bound to GDP and an active form bound to GTP. Activated by a guanine nucleotide-exchange factor (GEF) and inactivated by a GTPase-activating protein (GAP). Ras-related protein which binds GDP/GTP and possesses intrinsic GTPase activity. Involved in both yeast and hypha development. In the yeast phase, it is required for normal (polar) bud site selection and is involved in cell morphogenesis; in the yeast-mycelial transition it is involved in germ tube emergence; and in the development of the hyphae it is involved in cell elongation. The sequence is that of Ras-related protein RSR1 (RSR1) from Candida albicans (Yeast).